The primary structure comprises 416 residues: Enterobactin exporter EntS (416 aa).

Residues 1 to 21 are Cytoplasmic-facing; sequence MNKQSWLLNLSLLKTHPAFRA. Residues 22-42 traverse the membrane as a helical segment; it reads VFLARFISIVSLGLLGVAVPV. Over 43–55 the chain is Periplasmic; it reads QIQMMTHSTWLVG. A helical membrane pass occupies residues 56–76; it reads LSVTLTGGAMFVGLMVGGVLA. Over 77–83 the chain is Cytoplasmic; the sequence is DRYERKK. The chain crosses the membrane as a helical span at residues 84-104; sequence VILLARGTCGIGFIGLCLNAL. Over 105 to 109 the chain is Periplasmic; that stretch reads LPEPS. The helical transmembrane segment at 110-130 threads the bilayer; it reads LLAIYLLGLWDGFFASLGVTA. Topologically, residues 131–156 are cytoplasmic; the sequence is LLAATPALVGRENLMQAGAITMLTVR. The chain crosses the membrane as a helical span at residues 157 to 177; that stretch reads LGSVISPMIGGLLLATGGVAW. Residue asparagine 178 is a topological domain, periplasmic. The helical transmembrane segment at 179-199 threads the bilayer; sequence YGLAAAGTFITLLPLLSLPAL. The Cytoplasmic segment spans residues 200–218; it reads PPPPQPREHPLKSLLAGFR. The helical transmembrane segment at 219–239 threads the bilayer; sequence FLLASPLVGGIALLGGLLTMA. Over 240–256 the chain is Periplasmic; it reads SAVRVLYPALADNWQMS. A helical membrane pass occupies residues 257–277; the sequence is AAEIGFLYAAIPLGAAIGALT. Residues 278–287 are Cytoplasmic-facing; the sequence is SGKLAHSARP. A helical membrane pass occupies residues 288 to 307; the sequence is GLLMLLSTLGSFLAIGLFGL. The Periplasmic segment spans residues 308 to 313; that stretch reads MPMWIL. The chain crosses the membrane as a helical span at residues 314-336; the sequence is GVVCLALFGWLSAVSSLLQYTML. Residues 337–356 lie on the Cytoplasmic side of the membrane; the sequence is QTQTPEAMLGRINGLWTAQN. The chain crosses the membrane as a helical span at residues 357 to 377; sequence VTGDAIGAALLGGLGAMMTPV. Alanine 378 is a topological domain (periplasmic). Residues 379 to 399 traverse the membrane as a helical segment; that stretch reads SASASGFGLLIIGVLLLLVLV. Residues 400–416 lie on the Cytoplasmic side of the membrane; that stretch reads ELRRFRQTPPQVTASDS.

Belongs to the major facilitator superfamily. EntS (TC 2.A.1.38) family.

It is found in the cell inner membrane. In terms of biological role, component of an export pathway for enterobactin. The chain is Enterobactin exporter EntS from Shigella boydii serotype 4 (strain Sb227).